A 132-amino-acid polypeptide reads, in one-letter code: MSMTDPIADMLTRIRNAGMAKHQKVDIPSSNLKVSLANLLRNEGFIKNYKVIADNKQGVLRVYLKYIDEKDPVINEIKRISKPGGRVYVDSDGIPKVKNGLGVAVLSTSKGIITDKTARELGVGGELLCTVW.

Belongs to the universal ribosomal protein uS8 family. In terms of assembly, part of the 30S ribosomal subunit. Contacts proteins S5 and S12.

In terms of biological role, one of the primary rRNA binding proteins, it binds directly to 16S rRNA central domain where it helps coordinate assembly of the platform of the 30S subunit. In Geotalea uraniireducens (strain Rf4) (Geobacter uraniireducens), this protein is Small ribosomal subunit protein uS8.